The chain runs to 92 residues: Small ribosomal subunit protein uS19c (92 aa).

It belongs to the universal ribosomal protein uS19 family.

The protein resides in the plastid. It is found in the chloroplast. Protein S19 forms a complex with S13 that binds strongly to the 16S ribosomal RNA. The sequence is that of Small ribosomal subunit protein uS19c from Cicer arietinum (Chickpea).